The sequence spans 170 residues: Heat shock protein beta-7 (170 aa).

The interval 1–39 (MSHRTSSTFRAERSFHSSSSSSSSSTSSSASRALPAQDP) is disordered. A required for localization to SC35 splicing speckles region spans residues 1–71 (MSHRTSSTFR…PLAFPARPGG (71 aa)). The span at 16-31 (HSSSSSSSSSTSSSAS) shows a compositional bias: low complexity. One can recognise a sHSP domain in the interval 62-170 (PLAFPARPGG…QQTFRTEIKI (109 aa)).

Belongs to the small heat shock protein (HSP20) family. In terms of assembly, interacts with C-terminal domain of actin-binding protein 280. In terms of tissue distribution, isoform 1 is highly expressed in adult and fetal heart, skeletal muscle, and at a much lower levels in adipose tissue and in aorta. Undetectable in other tissues. Isoform 2 and isoform 3 are poorly detected in heart.

The protein localises to the cytoplasm. It localises to the nucleus. It is found in the cajal body. The sequence is that of Heat shock protein beta-7 (HSPB7) from Homo sapiens (Human).